The following is a 592-amino-acid chain: Alanine aminotransferase, mitochondrial (592 aa).

A mitochondrion-targeting transit peptide spans Met-1 to His-64. Ser-77 carries the phosphoserine modification. Pyridoxal 5'-phosphate-binding residues include Ala-258, Ser-259, Tyr-284, Asn-340, and Ser-409. N6-(pyridoxal phosphate)lysine is present on Lys-412. Arg-421 provides a ligand contact to pyridoxal 5'-phosphate.

It belongs to the class-I pyridoxal-phosphate-dependent aminotransferase family. Alanine aminotransferase subfamily. As to quaternary structure, homodimer. Pyridoxal 5'-phosphate serves as cofactor.

It is found in the mitochondrion matrix. It catalyses the reaction L-alanine + 2-oxoglutarate = pyruvate + L-glutamate. It participates in amino-acid degradation; L-alanine degradation via transaminase pathway; pyruvate from L-alanine: step 1/1. Its function is as follows. Alanine aminotransferase involved in both alanine biosynthesis and utilization. Under respiratory conditions, constitutes the sole pathway for alanine biosynthesis and catabolism. Under fermentative conditions, it plays a catabolic role and alanine is mainly synthesized through an alternative pathway. The polypeptide is Alanine aminotransferase, mitochondrial (ALT1) (Saccharomyces cerevisiae (strain ATCC 204508 / S288c) (Baker's yeast)).